The sequence spans 422 residues: Dioxygenase str8 (422 aa).

Zn(2+) is bound by residues Cys73, Cys75, Cys78, and His119. Positions 243, 245, and 382 each coordinate Fe cation.

The protein belongs to the gamma-BBH/TMLD family. The cofactor is Fe(2+).

It participates in mycotoxin biosynthesis. Dioxygenase; part of the gene cluster that mediates the biosynthesis of strobilurin A, an antifungal polyketide that contains a key beta-methoxyacrylate toxophore that targets the complex III of the mitochondrial electron transport chain. Strobilurin biosynthesis begins with construction of benzoyl CoA by step-wise elimination of ammonia from phenylalanine by the phenylalanine ammonia-lyase str11, oxygenation by str8 and retro-Claisen reaction to form benzoic acid, which is activated to its CoA thiolester benzoyl CoA by the dedicated CoA ligase str10. Benzoyl CoA forms the starter unit for the highly reducing polyketide synthase stpks1 that produces the polyketide prestrobilutin A. The FAD-dependent oxygenase str9 then catalyzes the key oxidative rearrangement responsible for the creation of the beta-methoxyacrylate toxophore. Str9 performs epoxidation of the 2,3 olefin of prestrobilutin A, followed by Meinwald rearrangement to furnish the aldehyde intermediate. Rapid enolization of the aldehyde intermediate would give the beta-methoxyacrylate skeleton and methylations catalyzed by str2 and str3 complete the synthesis and lead to the production of strobilurin A. The short-chain dehydrogenase stl2 and the dehydrogenase str4 play a role in the shunt pathway leading to the production of bolineol. The cluster encodes no obvious halogenase gene that could be involved in production of strobilurin B, nor any obvious dimethylallyl-transferase that could be involved in the production of strobilurin G. It is possible that unknown proteins encoded in, or near, the cluster (such as str1 or stl1) may form new classes of halogenases or dimethylally-transferases, or that the responsible genes are located elsewhere on the genome. Similarly, proteins encoded by str5/str6 hydrolases appear to have no chemical role in the biosynthesis of strobilurin A. Finally, no obvious self-resistance gene is found within the cluster. This chain is Dioxygenase str8, found in Strobilurus tenacellus.